The primary structure comprises 325 residues: 2-dehydro-3-deoxygluconokinase (325 aa).

Residues 49-53 (GSEAN), Tyr105, 121-123 (YYR), and Arg181 each bind substrate. ATP contacts are provided by residues 179-181 (NIR), 240-245 (KLGAEG), and 269-272 (GAGD). The substrate site is built by Asp272 and Asp308. Asp272 functions as the Proton acceptor in the catalytic mechanism.

This sequence belongs to the carbohydrate kinase PfkB family. In terms of assembly, homohexamer; trimer of dimers.

It catalyses the reaction 2-dehydro-3-deoxy-D-gluconate + ATP = 2-dehydro-3-deoxy-6-phospho-D-gluconate + ADP + H(+). It functions in the pathway carbohydrate acid metabolism; 2-dehydro-3-deoxy-D-gluconate degradation; D-glyceraldehyde 3-phosphate and pyruvate from 2-dehydro-3-deoxy-D-gluconate: step 1/2. In terms of biological role, involved in the degradation of glucose via the semi-phosphorylative Entner-Doudoroff pathway. Catalyzes the phosphorylation of 2-keto-3-deoxygluconate (KDG) yielding 2-keto-3-deoxy-6-phosphogluconate (KDPG). This chain is 2-dehydro-3-deoxygluconokinase (kdgK), found in Thermoproteus tenax.